The sequence spans 531 residues: Anthranilate synthase component 1 (531 aa).

L-tryptophan contacts are provided by residues serine 56 and 284–286; that span reads PYM. Residue 324-325 participates in chorismate binding; it reads GS. Glutamate 351 provides a ligand contact to Mg(2+). Residues tyrosine 439, arginine 459, 473–475, and glycine 475 each bind chorismate; that span reads GGG. Glutamate 488 serves as a coordination point for Mg(2+). The interval 506–531 is disordered; sequence LHNITPDSVSAPDSVSSPDSVTEANS. Over residues 511–531 the composition is skewed to low complexity; it reads PDSVSAPDSVSSPDSVTEANS.

This sequence belongs to the anthranilate synthase component I family. In terms of assembly, heterotetramer consisting of two non-identical subunits: a beta subunit (TrpG) and a large alpha subunit (TrpE). The cofactor is Mg(2+).

The enzyme catalyses chorismate + L-glutamine = anthranilate + pyruvate + L-glutamate + H(+). Its pathway is amino-acid biosynthesis; L-tryptophan biosynthesis; L-tryptophan from chorismate: step 1/5. Feedback inhibited by tryptophan. Functionally, part of a heterotetrameric complex that catalyzes the two-step biosynthesis of anthranilate, an intermediate in the biosynthesis of L-tryptophan. In the first step, the glutamine-binding beta subunit (TrpG) of anthranilate synthase (AS) provides the glutamine amidotransferase activity which generates ammonia as a substrate that, along with chorismate, is used in the second step, catalyzed by the large alpha subunit of AS (TrpE) to produce anthranilate. In the absence of TrpG, TrpE can synthesize anthranilate directly from chorismate and high concentrations of ammonia. The protein is Anthranilate synthase component 1 (trpE) of Arthrobacter globiformis.